We begin with the raw amino-acid sequence, 208 residues long: Large ribosomal subunit protein uL4 (208 aa).

The interval 49 to 78 is disordered; that stretch reads KAKGISDISGTTAKPYRQKHTGRARQGSLR.

This sequence belongs to the universal ribosomal protein uL4 family. In terms of assembly, part of the 50S ribosomal subunit.

In terms of biological role, one of the primary rRNA binding proteins, this protein initially binds near the 5'-end of the 23S rRNA. It is important during the early stages of 50S assembly. It makes multiple contacts with different domains of the 23S rRNA in the assembled 50S subunit and ribosome. Functionally, forms part of the polypeptide exit tunnel. The polypeptide is Large ribosomal subunit protein uL4 (Anaplasma phagocytophilum (strain HZ)).